The following is a 366-amino-acid chain: MNQTGRTIGGPQNGVNTVINPFRVSPSEDRVSSRDETPRNYNNPFLNEDDTRRAHNSSVSNSRQERLPSYEEAAGTPKQQAPYPKEKKRSSGSNSHQHNHHHHRRTSHGHRDKDKQKSKSRTKVKPPKNVDTIDKMDVTGLFGGSFHHDGPFDACTPQRNKNNKVAPVLAFPADGPNNTVGGRTSKKSTLDEVFGRETVDDDSETLNQLQDRAYLFNKANSSTTTLDAIKPNSKNITQFDSKMKTELVHGPITMGLGSTTFLDGAPASSAAIEQDVINHAQESRRKNSIARKKSLPSRRHLQVNNNNLKLVKTHSGHLEQKDVDDNRTSVPVTATQGSGHEDVVKKENTGNKLLRRVKSLKTSKKH.

Residues 1–135 (MNQTGRTIGG…PPKNVDTIDK (135 aa)) are disordered. Basic and acidic residues predominate over residues 26–38 (PSEDRVSSRDETP). A Phosphoserine modification is found at S69. Residue T76 is modified to Phosphothreonine. Residue K78 forms a Glycyl lysine isopeptide (Lys-Gly) (interchain with G-Cter in ubiquitin) linkage. Residues 97–108 (QHNHHHHRRTSH) are compositionally biased toward basic residues. K187 is covalently cross-linked (Glycyl lysine isopeptide (Lys-Gly) (interchain with G-Cter in ubiquitin)). T189 is subject to Phosphothreonine. K242 is covalently cross-linked (Glycyl lysine isopeptide (Lys-Gly) (interchain with G-Cter in ubiquitin)). S288 and S294 each carry phosphoserine. Residues 313 to 366 (THSGHLEQKDVDDNRTSVPVTATQGSGHEDVVKKENTGNKLLRRVKSLKTSKKH) form a disordered region. Residues 316–327 (GHLEQKDVDDNR) are compositionally biased toward basic and acidic residues. Residues 328-338 (TSVPVTATQGS) show a composition bias toward polar residues. Basic and acidic residues predominate over residues 339–349 (GHEDVVKKENT). Residues 353-366 (LLRRVKSLKTSKKH) are compositionally biased toward basic residues. At S359 the chain carries Phosphoserine.

This sequence belongs to the pal1 family.

The protein localises to the cytoplasm. It localises to the nucleus. This is an uncharacterized protein from Saccharomyces cerevisiae (strain ATCC 204508 / S288c) (Baker's yeast).